The following is a 758-amino-acid chain: Aspartyl/asparaginyl beta-hydroxylase (758 aa).

The disordered stretch occupies residues 1 to 46; that stretch reads MAQRKNAKSSGNSSSSGSGSGSTSAGSSSPGARRETKHGGHKNGRK. Over 1-53 the chain is Cytoplasmic; that stretch reads MAQRKNAKSSGNSSSSGSGSGSTSAGSSSPGARRETKHGGHKNGRKGGLSGTS. Residues 9-31 show a composition bias toward low complexity; that stretch reads SSGNSSSSGSGSGSTSAGSSSPG. Ser14 is modified (phosphoserine). Residues 54-74 traverse the membrane as a helical; Signal-anchor for type II membrane protein segment; that stretch reads FFTWFMVIALLGVWTSVAVVW. An N-linked (GlcNAc...) asparagine glycan is attached at Leu64. The Lumenal portion of the chain corresponds to 75–758; the sequence is FDLVDYEEVL…PQQRRSLPAI (684 aa). Ca(2+) is bound by residues Asp91, Asp93, Asp95, Asp97, and Asp102. Disordered stretches follow at residues 111 to 140 and 304 to 324; these read ERSTSEPAVPPEEAEPHTEPEEQVPVEAEP and EEQQEVPPETNRKTDDPEQKA. The segment covering 313-324 has biased composition (basic and acidic residues); sequence TNRKTDDPEQKA. The TPR 1 repeat unit spans residues 341-374; sequence IKAELDAAEKLRKRGKIEEAVNAFKELVRKYPQS. Asn452 carries N-linked (GlcNAc...) asparagine glycosylation. TPR repeat units follow at residues 454–487, 489–521, and 525–557; these read TSLKNDLGVGYLLIGDNDNAKKVYEEVLSVTPND, FAKVHYGFILKAQNKIAESIPYLKEGIESGDPG, and GRFYFHLGDAMQRVGNKEAYKWYELGHKRGHFA. Trp625 lines the 2-oxoglutarate pocket. An intrachain disulfide couples Cys641 to Cys648. Residue Ser668 coordinates 2-oxoglutarate. A Fe cation-binding site is contributed by His679. 688–690 is a binding site for 2-oxoglutarate; it reads RMH. Asn706 is a glycosylation site (N-linked (GlcNAc...) asparagine). Position 725 (His725) interacts with Fe cation. Arg735 contributes to the 2-oxoglutarate binding site.

The protein belongs to the aspartyl/asparaginyl beta-hydroxylase family. Monomer. Isoform 8 interacts with ORAI1 and STIM1. Isoform 4 interacts with CASQ2. It depends on Fe cation as a cofactor. As to expression, isoform 1 is detected in all tissues tested. Isoform 8 is mainly expressed in pancreas, heart, brain, kidney and liver. Isoform 8 is expressed in kidney (at protein level).

The protein resides in the endoplasmic reticulum membrane. It localises to the sarcoplasmic reticulum membrane. The enzyme catalyses L-aspartyl-[protein] + 2-oxoglutarate + O2 = 3-hydroxy-L-aspartyl-[protein] + succinate + CO2. Functionally, specifically hydroxylates an Asp or Asn residue in certain epidermal growth factor-like (EGF) domains of a number of proteins. Its function is as follows. Membrane-bound Ca(2+)-sensing protein, which is a structural component of the ER-plasma membrane junctions. Isoform 8 regulates the activity of Ca(+2) released-activated Ca(+2) (CRAC) channels in T-cells. This Homo sapiens (Human) protein is Aspartyl/asparaginyl beta-hydroxylase (ASPH).